A 429-amino-acid polypeptide reads, in one-letter code: Septin-8 (429 aa).

Positions 1 to 16 (MAATDLERVSNAEPEP) are enriched in basic and acidic residues. Residues 1-23 (MAATDLERVSNAEPEPRSLSLGG) form a disordered region. The residue at position 2 (Ala2) is an N-acetylalanine. A Phosphoserine modification is found at Ser10. The region spanning 41-307 (QGFSFNILCV…ELYRRCKLEE (267 aa)) is the Septin-type G domain. The segment at 51 to 58 (GETGIGKS) is G1 motif. GTP-binding positions include 51–58 (GETGIGKS), Gly106, 187–195 (KADTISKSE), Gly241, and Arg256. Positions 103-106 (DAVG) are G3 motif. The segment at 186-189 (AKAD) is G4 motif. Residues 320 to 412 (FSLQETYEAK…AAMEALQSQA (93 aa)) adopt a coiled-coil conformation. Residues 409–420 (QSQALHATSQQP) are compositionally biased toward polar residues. Positions 409–429 (QSQALHATSQQPLRKDKDKKN) are disordered.

It belongs to the TRAFAC class TrmE-Era-EngA-EngB-Septin-like GTPase superfamily. Septin GTPase family. As to quaternary structure, septins polymerize into heterooligomeric protein complexes that form filaments, and can associate with cellular membranes, actin filaments and microtubules. GTPase activity is required for filament formation. Interacts with SEPTIN5. Interacts with CDK14, SEPTIN4 and SEPTIN7. Interacts with VAMP2; the interaction inhibits interaction of VAMP2 with SYP. Interacts with STX1A.

The protein localises to the cytoplasm. The protein resides in the cytoskeleton. Its subcellular location is the synapse. It localises to the cell projection. It is found in the axon. The protein localises to the cytoplasmic vesicle. The protein resides in the secretory vesicle. Its subcellular location is the synaptic vesicle membrane. It localises to the presynapse. Filament-forming cytoskeletal GTPase. May play a role in platelet secretion. Seems to participate in the process of SNARE complex formation in synaptic vesicles. This chain is Septin-8, found in Mus musculus (Mouse).